A 213-amino-acid chain; its full sequence is MDSSIEQKYKQLLDIVPSVSRETMENLIQFESLILQWNAHINLISAATIPDLWTRHILDSAQIFPLCSHSLQWCDLGSGGGFPAIVIAIFLKEKRSGHINLVESNGKKVAFLRTVIAQLNLPATVYHARIEDIYQKIPISDIITARGLAPLNELLQLIFPLLTEKTIALLQKGRDYATEVKNASANWHFDLLKHTSKIDENSVILEISHIRSY.

S-adenosyl-L-methionine contacts are provided by residues G77, F82, 130-131 (IE), and R146.

The protein belongs to the methyltransferase superfamily. RNA methyltransferase RsmG family.

Its subcellular location is the cytoplasm. The catalysed reaction is guanosine(527) in 16S rRNA + S-adenosyl-L-methionine = N(7)-methylguanosine(527) in 16S rRNA + S-adenosyl-L-homocysteine. Its function is as follows. Specifically methylates the N7 position of guanine in position 527 of 16S rRNA. The polypeptide is Ribosomal RNA small subunit methyltransferase G (Bartonella tribocorum (strain CIP 105476 / IBS 506)).